Reading from the N-terminus, the 544-residue chain is Chaperonin GroEL 3 (544 aa).

ATP-binding positions include 30–33, Lys51, 87–91, Gly415, and Asp496; these read TLGP and DGTTT.

This sequence belongs to the chaperonin (HSP60) family. In terms of assembly, forms a cylinder of 14 subunits composed of two heptameric rings stacked back-to-back. Interacts with the co-chaperonin GroES.

It is found in the cytoplasm. The catalysed reaction is ATP + H2O + a folded polypeptide = ADP + phosphate + an unfolded polypeptide.. In terms of biological role, together with its co-chaperonin GroES, plays an essential role in assisting protein folding. The GroEL-GroES system forms a nano-cage that allows encapsulation of the non-native substrate proteins and provides a physical environment optimized to promote and accelerate protein folding. In Rhizobium etli (strain ATCC 51251 / DSM 11541 / JCM 21823 / NBRC 15573 / CFN 42), this protein is Chaperonin GroEL 3.